The chain runs to 320 residues: MTAVQWRSHLTDDQQRQVRDLVTAATQVDGVAPVGEQVLRELAQQRTEHLLVEDQSPGKSAIGYLNLSPAHGADAAMAELVVHPQARRRGIATAMVRAALAKTGGRNQFWAHGTLAPAQATASALGLTPVRELVQMRRSLRQLPEPVIPNGLQIRTYAGTEDDAELLRVNNAAFAYHPEQGGWTEADLAERRGEPWFDPAGLFLALEGSEGAEDSPRGQPRLLGFHWTKIHLDDPGLGEVYVLGVDPAAQGRGLGRTLTMIGLRSLAQRLGDRDLGRESTVMLYVESDNIAAVRTYQGLGFSTHSVDTAYALAAPDAALA.

N-acetyltransferase domains lie at 16 to 141 (RQVR…RSLR) and 152 to 320 (LQIR…AALA). Residue E36 participates in 1D-myo-inositol 2-(L-cysteinylamino)-2-deoxy-alpha-D-glucopyranoside binding. Acetyl-CoA-binding positions include 80–82 (LVV) and 88–93 (RRGIAT). Residues E179, K229, and E239 each coordinate 1D-myo-inositol 2-(L-cysteinylamino)-2-deoxy-alpha-D-glucopyranoside. Acetyl-CoA is bound by residues 243–245 (LGV) and 250–256 (QGRGLGR). 1D-myo-inositol 2-(L-cysteinylamino)-2-deoxy-alpha-D-glucopyranoside is bound at residue Y284. Residue 289–294 (NIAAVR) participates in acetyl-CoA binding.

It belongs to the acetyltransferase family. MshD subfamily. Monomer.

The catalysed reaction is 1D-myo-inositol 2-(L-cysteinylamino)-2-deoxy-alpha-D-glucopyranoside + acetyl-CoA = mycothiol + CoA + H(+). In terms of biological role, catalyzes the transfer of acetyl from acetyl-CoA to desacetylmycothiol (Cys-GlcN-Ins) to form mycothiol. The sequence is that of Mycothiol acetyltransferase from Mycobacterium marinum (strain ATCC BAA-535 / M).